A 281-amino-acid chain; its full sequence is Undecaprenyl-diphosphatase (281 aa).

6 helical membrane passes run 90–110 (WLVTLGTIPIGVLGLLFQDSI), 113–133 (VLRGFVVIGTTLWLFALVLGA), 147–167 (LSWKHGLLFGLAQALALIPGV), 191–211 (SFLLAIPAVVLSGFYQLYDEL), 217–237 (IAWVPTAVATVVAFVVGYAVI), and 257–277 (IAAAVVVYALVLAGALPAFQG).

It belongs to the UppP family.

The protein localises to the cell membrane. It catalyses the reaction di-trans,octa-cis-undecaprenyl diphosphate + H2O = di-trans,octa-cis-undecaprenyl phosphate + phosphate + H(+). In terms of biological role, catalyzes the dephosphorylation of undecaprenyl diphosphate (UPP). Confers resistance to bacitracin. In Kineococcus radiotolerans (strain ATCC BAA-149 / DSM 14245 / SRS30216), this protein is Undecaprenyl-diphosphatase.